The primary structure comprises 55 residues: Hirustasin (55 aa).

5 disulfides stabilise this stretch: C6–C17, C11–C22, C24–C44, C29–C48, and C33–C50. The 27-residue stretch at 24-50 (CNEVHCRIRCKYGLKKDENGCEYPCSC) folds into the Antistasin-like domain.

This sequence belongs to the protease inhibitor I15 (antistasin) family.

It localises to the secreted. Functionally, acts as an inhibitor of tissue kallikrein, trypsin, chymotrypsin and neutrophil cathepsin G. The polypeptide is Hirustasin (Hirudo medicinalis (Medicinal leech)).